The sequence spans 380 residues: uncharacterized protein (380 aa).

This is an uncharacterized protein from Methanocaldococcus jannaschii (strain ATCC 43067 / DSM 2661 / JAL-1 / JCM 10045 / NBRC 100440) (Methanococcus jannaschii).